Consider the following 637-residue polypeptide: Early transcription factor 70 kDa subunit (637 aa).

Belongs to the helicase family. VETF subfamily. As to quaternary structure, heterodimer of a 70 kDa and a 82 kDa subunit. Part of the early transcription complex composed of ETF, RAP94/OPG109, and the DNA-directed RNA polymerase. In terms of processing, apparently non-glycosylated.

Its subcellular location is the virion. Its function is as follows. Acts with RNA polymerase to initiate transcription from early gene promoters. Is recruited by the RPO-associated protein of 94 kDa RAP94/OPG109 to form the early transcription complex, which also contains the core RNA polymerase. ETF heterodimer binds to early gene promoters. This Monkeypox virus protein is Early transcription factor 70 kDa subunit (OPG118).